A 392-amino-acid chain; its full sequence is Formate-dependent phosphoribosylglycinamide formyltransferase (392 aa).

N(1)-(5-phospho-beta-D-ribosyl)glycinamide is bound by residues 22 to 23 (EL) and glutamate 82. Residues arginine 114, lysine 155, 160–165 (SSGKGQ), 195–198 (EGEV), and glutamate 203 each bind ATP. Positions 119 to 308 (RLAAETLALP…EFALHVRAFL (190 aa)) constitute an ATP-grasp domain. Mg(2+) contacts are provided by glutamate 267 and glutamate 279. N(1)-(5-phospho-beta-D-ribosyl)glycinamide contacts are provided by residues aspartate 286, lysine 355, and 362–363 (RR).

It belongs to the PurK/PurT family. In terms of assembly, homodimer.

It catalyses the reaction N(1)-(5-phospho-beta-D-ribosyl)glycinamide + formate + ATP = N(2)-formyl-N(1)-(5-phospho-beta-D-ribosyl)glycinamide + ADP + phosphate + H(+). It participates in purine metabolism; IMP biosynthesis via de novo pathway; N(2)-formyl-N(1)-(5-phospho-D-ribosyl)glycinamide from N(1)-(5-phospho-D-ribosyl)glycinamide (formate route): step 1/1. In terms of biological role, involved in the de novo purine biosynthesis. Catalyzes the transfer of formate to 5-phospho-ribosyl-glycinamide (GAR), producing 5-phospho-ribosyl-N-formylglycinamide (FGAR). Formate is provided by PurU via hydrolysis of 10-formyl-tetrahydrofolate. This Edwardsiella ictaluri (strain 93-146) protein is Formate-dependent phosphoribosylglycinamide formyltransferase.